The primary structure comprises 241 residues: Methylthioribulose-1-phosphate dehydratase (241 aa).

Over residues 1-12 (MSQEITQKDNND) the composition is skewed to basic and acidic residues. The tract at residues 1–22 (MSQEITQKDNNDHLVQSSDPDH) is disordered. Residue Cys101 coordinates substrate. His118 and His120 together coordinate Zn(2+). The active-site Proton donor/acceptor is the Glu147. Residue His203 coordinates Zn(2+).

This sequence belongs to the aldolase class II family. MtnB subfamily. The cofactor is Zn(2+).

Its subcellular location is the cytoplasm. It catalyses the reaction 5-(methylsulfanyl)-D-ribulose 1-phosphate = 5-methylsulfanyl-2,3-dioxopentyl phosphate + H2O. It participates in amino-acid biosynthesis; L-methionine biosynthesis via salvage pathway; L-methionine from S-methyl-5-thio-alpha-D-ribose 1-phosphate: step 2/6. Its function is as follows. Catalyzes the dehydration of methylthioribulose-1-phosphate (MTRu-1-P) into 2,3-diketo-5-methylthiopentyl-1-phosphate (DK-MTP-1-P). The protein is Methylthioribulose-1-phosphate dehydratase of Aspergillus terreus (strain NIH 2624 / FGSC A1156).